Here is a 373-residue protein sequence, read N- to C-terminus: Chaperone protein DnaJ (373 aa).

Residues 5–70 form the J domain; the sequence is DYYEVLGVNR…QKRAAYDQYG (66 aa). A CR-type zinc finger spans residues 133–211; the sequence is GTETKIRIPV…CHGGGRVKQH (79 aa). Residues cysteine 146, cysteine 149, cysteine 163, cysteine 166, cysteine 185, cysteine 188, cysteine 199, and cysteine 202 each contribute to the Zn(2+) site. 4 CXXCXGXG motif repeats span residues 146-153, 163-170, 185-192, and 199-206; these read CETCHGSG, CSTCGGHG, CPKCHGSG, and CPTCHGGG. Residues 346-373 are disordered; that stretch reads LEDINQQDSGKHSPREKSWMTKVKDFFQ. A compositionally biased stretch (basic and acidic residues) spans 354-373; the sequence is SGKHSPREKSWMTKVKDFFQ.

It belongs to the DnaJ family. Homodimer. Zn(2+) is required as a cofactor.

It is found in the cytoplasm. Its function is as follows. Participates actively in the response to hyperosmotic and heat shock by preventing the aggregation of stress-denatured proteins and by disaggregating proteins, also in an autonomous, DnaK-independent fashion. Unfolded proteins bind initially to DnaJ; upon interaction with the DnaJ-bound protein, DnaK hydrolyzes its bound ATP, resulting in the formation of a stable complex. GrpE releases ADP from DnaK; ATP binding to DnaK triggers the release of the substrate protein, thus completing the reaction cycle. Several rounds of ATP-dependent interactions between DnaJ, DnaK and GrpE are required for fully efficient folding. Also involved, together with DnaK and GrpE, in the DNA replication of plasmids through activation of initiation proteins. This is Chaperone protein DnaJ from Methylobacillus flagellatus (strain ATCC 51484 / DSM 6875 / VKM B-1610 / KT).